Here is a 572-residue protein sequence, read N- to C-terminus: Proline--tRNA ligase (572 aa).

This sequence belongs to the class-II aminoacyl-tRNA synthetase family. ProS type 1 subfamily. As to quaternary structure, homodimer.

It localises to the cytoplasm. It carries out the reaction tRNA(Pro) + L-proline + ATP = L-prolyl-tRNA(Pro) + AMP + diphosphate. Functionally, catalyzes the attachment of proline to tRNA(Pro) in a two-step reaction: proline is first activated by ATP to form Pro-AMP and then transferred to the acceptor end of tRNA(Pro). As ProRS can inadvertently accommodate and process non-cognate amino acids such as alanine and cysteine, to avoid such errors it has two additional distinct editing activities against alanine. One activity is designated as 'pretransfer' editing and involves the tRNA(Pro)-independent hydrolysis of activated Ala-AMP. The other activity is designated 'posttransfer' editing and involves deacylation of mischarged Ala-tRNA(Pro). The misacylated Cys-tRNA(Pro) is not edited by ProRS. This chain is Proline--tRNA ligase, found in Psychrobacter arcticus (strain DSM 17307 / VKM B-2377 / 273-4).